The chain runs to 408 residues: Histidine--tRNA ligase (408 aa).

The protein belongs to the class-II aminoacyl-tRNA synthetase family. Homodimer.

The protein resides in the cytoplasm. It catalyses the reaction tRNA(His) + L-histidine + ATP = L-histidyl-tRNA(His) + AMP + diphosphate + H(+). The polypeptide is Histidine--tRNA ligase (Campylobacter jejuni subsp. jejuni serotype O:2 (strain ATCC 700819 / NCTC 11168)).